We begin with the raw amino-acid sequence, 1491 residues long: CLIP-associating protein (1491 aa).

HEAT repeat units follow at residues 44-82 (CTDM…RLGS), 85-123 (NAYT…HRVL), 163-201 (QLSV…HVGD), and 402-440 (DAFC…YTHA). Disordered stretches follow at residues 537 to 586 (RERE…AVDT) and 600 to 739 (LYSR…NNPV). Gly residues predominate over residues 542 to 551 (GGGGGTGTGT). Polar residues predominate over residues 569 to 580 (GTLQKPTPSMRS). Serine 582, serine 626, and serine 634 each carry phosphoserine. The span at 632–646 (LNSNSGGTPATTPGS) shows a compositional bias: polar residues. Threonine 648 is subject to Phosphothreonine. Composition is skewed to polar residues over residues 657 to 671 (VSQS…SPST) and 699 to 712 (PRST…SPTR). Serine 806, serine 817, serine 820, serine 822, and serine 824 each carry phosphoserine. HEAT repeat units follow at residues 874-912 (QQQL…VHAN) and 955-993 (QLQL…TYCK). Disordered stretches follow at residues 1065 to 1127 (HMRR…SVEQ) and 1167 to 1205 (GHLQ…ESAT). Low complexity-rich tracts occupy residues 1070–1097 (SQSC…QSPS), 1111–1124 (LSIS…RQSS), and 1181–1200 (ASLS…QSNT). A phosphoserine mark is found at serine 1120, serine 1123, and serine 1124. HEAT repeat units follow at residues 1289–1327 (NKHF…SNKM) and 1408–1446 (DAHL…VLGE).

The protein belongs to the CLASP family. In terms of assembly, interacts with CLIP-190 and microtubules. As to expression, expressed in testis and ovary.

It localises to the cytoplasm. The protein resides in the cytoskeleton. The protein localises to the nucleus. It is found in the microtubule organizing center. Its subcellular location is the centrosome. It localises to the spindle. The protein resides in the cell projection. The protein localises to the growth cone. It is found in the cleavage furrow. In terms of biological role, microtubule plus-end tracking protein that promotes the stabilization of dynamic microtubules. Required for several aspects of mitotic spindle formation including the formation of the overlapping central spindle microtubules and kinetochore attachment. Required for the incorporation of tubulin subunits at the plus ends of kinetochore microtubules during poleward microtubule flux. Acts antagonistically to Klp10A and Klp67A to maintain metaphase spindle length. Also required for guidance of CNS axons downstream of Abl. May function to identify a subset of microtubules that probe the peripheral growth cone domain, where guidance signals exert their influence on cytoskeletal organization. Also required during oogenesis for the organization of the polarized microtubule network inside the 16-cell cyst that ensures oocyte differentiation. The protein is CLIP-associating protein (chb) of Drosophila melanogaster (Fruit fly).